Reading from the N-terminus, the 224-residue chain is V-type ATP synthase subunit D (224 aa).

The disordered stretch occupies residues 190-224 (REAGYTQKKIKAKIEGKNKEAREAAAATSHGSAAD). Residues 201 to 212 (AKIEGKNKEARE) are compositionally biased toward basic and acidic residues. The segment covering 213–224 (AAAATSHGSAAD) has biased composition (low complexity).

The protein belongs to the V-ATPase D subunit family.

Produces ATP from ADP in the presence of a proton gradient across the membrane. This is V-type ATP synthase subunit D (atpD) from Deinococcus radiodurans (strain ATCC 13939 / DSM 20539 / JCM 16871 / CCUG 27074 / LMG 4051 / NBRC 15346 / NCIMB 9279 / VKM B-1422 / R1).